Here is a 283-residue protein sequence, read N- to C-terminus: Ribosomal RNA small subunit methyltransferase A (283 aa).

Residues N22, L24, G49, E70, and N113 each contribute to the S-adenosyl-L-methionine site.

It belongs to the class I-like SAM-binding methyltransferase superfamily. rRNA adenine N(6)-methyltransferase family. RsmA subfamily.

It is found in the cytoplasm. The catalysed reaction is adenosine(1518)/adenosine(1519) in 16S rRNA + 4 S-adenosyl-L-methionine = N(6)-dimethyladenosine(1518)/N(6)-dimethyladenosine(1519) in 16S rRNA + 4 S-adenosyl-L-homocysteine + 4 H(+). Functionally, specifically dimethylates two adjacent adenosines (A1518 and A1519) in the loop of a conserved hairpin near the 3'-end of 16S rRNA in the 30S particle. May play a critical role in biogenesis of 30S subunits. This chain is Ribosomal RNA small subunit methyltransferase A, found in Myxococcus xanthus (strain DK1622).